Here is an 819-residue protein sequence, read N- to C-terminus: Transferrin 2 (819 aa).

The first 21 residues, 1–21 (MASSLVFVALVGALCFTLANA), serve as a signal peptide directing secretion. The region spanning 33-373 (MVWCTKSQAE…QYDQYRSERL (341 aa)) is the Transferrin-like 1 domain. Disulfide bonds link Cys-36–Cys-78 and Cys-46–Cys-69. N-linked (GlcNAc...) asparagine glycans are attached at residues Asn-48 and Asn-66. 2 residues coordinate Fe(3+): Asp-93 and Tyr-121. Intrachain disulfides connect Cys-147–Cys-237, Cys-190–Cys-213, and Cys-273–Cys-287. Positions 155 and 156 each coordinate hydrogencarbonate. N-linked (GlcNAc...) asparagine glycosylation is present at Asn-187. Tyr-231 provides a ligand contact to Fe(3+). Residues 325–361 (GTRDDQSRQGGQSFNSRNNINDQNAYGQFDNNDPYRT) form a disordered region. Polar residues predominate over residues 332–361 (RQGGQSFNSRNNINDQNAYGQFDNNDPYRT). An N-linked (GlcNAc...) asparagine glycan is attached at Asn-388. Positions 450–796 (MTLCVTSENE…FMRARRITDC (347 aa)) constitute a Transferrin-like 2 domain. Intrachain disulfides connect Cys-453–Cys-490 and Cys-463–Cys-481. Residues Asp-505 and Tyr-533 each contribute to the Fe(3+) site. Intrachain disulfides connect Cys-557–Cys-646, Cys-599–Cys-621, Cys-618–Cys-629, and Cys-687–Cys-701. Hydrogencarbonate is bound by residues Thr-559, Ala-565, and Gly-566. A glycan (N-linked (GlcNAc...) asparagine) is linked at Asn-720. Cys-796 carries the GPI-anchor amidated cysteine lipid modification. Positions 797-819 (YAGASQLALSVGLLLVGSLVAML) are cleaved as a propeptide — removed in mature form.

Belongs to the transferrin family. In terms of assembly, forms a complex composed of septa junction proteins Nrx-IV/Nrx, Tsf2/MTf, Cont and Nrg during late embryogenesis.

It localises to the apicolateral cell membrane. The protein resides in the cell junction. Its subcellular location is the septate junction. Functionally, iron-binding protein and component of septate junctions that form the paracellular permeability barrier in epithelial tissues. In an iron-dependent manner, required for septate junction assembly during epithelial maturation in embryos and mature septa junctions stability. The sequence is that of Transferrin 2 from Drosophila melanogaster (Fruit fly).